Reading from the N-terminus, the 226-residue chain is UPF0502 protein Gbem_0194 (226 aa).

The protein belongs to the UPF0502 family.

This Citrifermentans bemidjiense (strain ATCC BAA-1014 / DSM 16622 / JCM 12645 / Bem) (Geobacter bemidjiensis) protein is UPF0502 protein Gbem_0194.